The primary structure comprises 91 residues: Cell division protein FtsB (91 aa).

The Cytoplasmic portion of the chain corresponds to methionine 1 to tryptophan 3. Residues proline 4–leucine 21 form a helical membrane-spanning segment. Residues glycine 22 to histidine 91 lie on the Periplasmic side of the membrane. Residues arginine 28–arginine 72 are a coiled coil.

This sequence belongs to the FtsB family. Part of a complex composed of FtsB, FtsL and FtsQ.

It is found in the cell inner membrane. Essential cell division protein. May link together the upstream cell division proteins, which are predominantly cytoplasmic, with the downstream cell division proteins, which are predominantly periplasmic. This is Cell division protein FtsB from Azoarcus sp. (strain BH72).